Here is a 356-residue protein sequence, read N- to C-terminus: Epoxide hydrolase B (356 aa).

Residues 28–129 (PLVVLLHGFP…RCAGVVGISV (102 aa)) enclose the AB hydrolase-1 domain. Residue D104 is the Nucleophile of the active site. Catalysis depends on H333, which acts as the Proton acceptor.

The protein belongs to the AB hydrolase superfamily. Epoxide hydrolase family. Homodimer.

The enzyme catalyses an epoxide + H2O = an ethanediol. In terms of biological role, could be involved in detoxification of extraneous host-cell epoxides. Catalyzes the hydrolysis of small aromatic epoxide-containing substrates such as trans-1,3-diphenylpropene oxide, trans and cis-stilbene oxide, and terpenoid epoxide. The sequence is that of Epoxide hydrolase B from Mycobacterium tuberculosis (strain CDC 1551 / Oshkosh).